We begin with the raw amino-acid sequence, 275 residues long: Phosphonoacetaldehyde hydrolase (275 aa).

Aspartate 15 (nucleophile) is an active-site residue. Mg(2+) contacts are provided by aspartate 15 and alanine 17. The active-site Schiff-base intermediate with substrate is lysine 56. Aspartate 189 is a Mg(2+) binding site.

Belongs to the HAD-like hydrolase superfamily. PhnX family. In terms of assembly, homodimer. The cofactor is Mg(2+).

The catalysed reaction is phosphonoacetaldehyde + H2O = acetaldehyde + phosphate + H(+). Functionally, involved in phosphonate degradation. The sequence is that of Phosphonoacetaldehyde hydrolase from Pseudomonas putida (strain W619).